A 113-amino-acid chain; its full sequence is UPF0122 protein LSEI_1603 (113 aa).

Belongs to the UPF0122 family.

Functionally, might take part in the signal recognition particle (SRP) pathway. This is inferred from the conservation of its genetic proximity to ftsY/ffh. May be a regulatory protein. The protein is UPF0122 protein LSEI_1603 of Lacticaseibacillus paracasei (strain ATCC 334 / BCRC 17002 / CCUG 31169 / CIP 107868 / KCTC 3260 / NRRL B-441) (Lactobacillus paracasei).